A 100-amino-acid chain; its full sequence is NADH-quinone oxidoreductase subunit K 2 (100 aa).

Transmembrane regions (helical) follow at residues 2-22 (LAIE…TIGV), 29-49 (IVIF…FIAF), and 61-81 (FVFF…ALMI).

It belongs to the complex I subunit 4L family. NDH-1 is composed of 14 different subunits. Subunits NuoA, H, J, K, L, M, N constitute the membrane sector of the complex.

The protein resides in the cell inner membrane. The catalysed reaction is a quinone + NADH + 5 H(+)(in) = a quinol + NAD(+) + 4 H(+)(out). NDH-1 shuttles electrons from NADH, via FMN and iron-sulfur (Fe-S) centers, to quinones in the respiratory chain. The immediate electron acceptor for the enzyme in this species is believed to be ubiquinone. Couples the redox reaction to proton translocation (for every two electrons transferred, four hydrogen ions are translocated across the cytoplasmic membrane), and thus conserves the redox energy in a proton gradient. In Citrifermentans bemidjiense (strain ATCC BAA-1014 / DSM 16622 / JCM 12645 / Bem) (Geobacter bemidjiensis), this protein is NADH-quinone oxidoreductase subunit K 2.